Reading from the N-terminus, the 401-residue chain is Argininosuccinate synthase (401 aa).

ATP contacts are provided by residues 9 to 17 (AYSGGLDTS) and A36. Residues Y87 and S92 each coordinate L-citrulline. Position 117 (G117) interacts with ATP. T119, N123, and D124 together coordinate L-aspartate. An L-citrulline-binding site is contributed by N123. 5 residues coordinate L-citrulline: R127, S176, S185, E261, and Y273.

This sequence belongs to the argininosuccinate synthase family. Type 1 subfamily. As to quaternary structure, homotetramer.

It localises to the cytoplasm. The catalysed reaction is L-citrulline + L-aspartate + ATP = 2-(N(omega)-L-arginino)succinate + AMP + diphosphate + H(+). It functions in the pathway amino-acid biosynthesis; L-arginine biosynthesis; L-arginine from L-ornithine and carbamoyl phosphate: step 2/3. In Syntrophobacter fumaroxidans (strain DSM 10017 / MPOB), this protein is Argininosuccinate synthase.